The sequence spans 2383 residues: Reducing polyketide synthase rdc5 (2383 aa).

The Ketosynthase family 3 (KS3) domain occupies 10–438 (RAPIAIIGMS…GTNAHLVLER (429 aa)). Residues C186, H321, and H361 each act as for beta-ketoacyl synthase activity in the active site. The malonyl-CoA:ACP transacylase (MAT) domain stretch occupies residues 550–881 (FVFTGQGAQW…GFAAELFRRG (332 aa)). An N-terminal hotdog fold region spans residues 930-1066 (KSLIGAERPS…GLFSINYEDS (137 aa)). The 324-residue stretch at 930-1253 (KSLIGAERPS…LAELEVEDAD (324 aa)) folds into the PKS/mFAS DH domain. The dehydratase (DH) domain stretch occupies residues 932 to 1250 (LIGAERPSLD…DFHLAELEVE (319 aa)). Catalysis depends on H962, which acts as the Proton acceptor; for dehydratase activity. The C-terminal hotdog fold stretch occupies residues 1094–1253 (VEVISKQAFY…LAELEVEDAD (160 aa)). The active-site Proton donor; for dehydratase activity is D1160. Residues 1663–1977 (GLLNTLHFVS…QGKHVGKMIL (315 aa)) are enoyl reductase (ER) domain. The active-site Phosphocysteine intermediate is C1776. Residues 2002 to 2182 (ATYLFIGGLG…VSVNLGIMRD (181 aa)) are ketoreductase (KR) domain. The Carrier domain maps to 2300–2377 (AAGPIITKAL…QFAVQIAKKS (78 aa)). S2337 bears the O-(pantetheine 4'-phosphoryl)serine mark.

It participates in secondary metabolite biosynthesis. In terms of biological role, reducing polyketide synthase; part of the gene cluster that mediates the biosynthesis of radicicol, a resorcylic acid lactone (RAL) that irreversibly inhibits the HSP90 molecular chaperone, an important target for cancer chemotherapy. The radicicol cluster encodes only two apparent post-PKS enzymes, a cytochrome P450 monooxygenase (rdc4) and a non-heme halogenase (rdc2) that could introduce the epoxide and the chlorine, respectively. If this cluster includes all the genes required for radicicol biosynthesis, the remaining structural features of radicicol are presumably generated by the PKSs rdc1 and rdc5. The C-2' ketone could arise if the R-PKS rdc5 and NR-PKS rdc1 each carry out four iterations, in contrast to the five iteration-three iteration split for the hypothemycin PKSs. The origin of the cis 5',6' double bond is not known. The radicicol R-PKS rdc5 ER domain may catalyze either double bond isomerization or reduction in the third iteration. The chain is Reducing polyketide synthase rdc5 from Metacordyceps chlamydosporia (Nematophagous fungus).